The sequence spans 218 residues: Deoxyribose-phosphate aldolase (218 aa).

The Proton donor/acceptor role is filled by D92. The Schiff-base intermediate with acetaldehyde role is filled by K156. K185 serves as the catalytic Proton donor/acceptor.

The protein belongs to the DeoC/FbaB aldolase family. DeoC type 1 subfamily.

It localises to the cytoplasm. It catalyses the reaction 2-deoxy-D-ribose 5-phosphate = D-glyceraldehyde 3-phosphate + acetaldehyde. It functions in the pathway carbohydrate degradation; 2-deoxy-D-ribose 1-phosphate degradation; D-glyceraldehyde 3-phosphate and acetaldehyde from 2-deoxy-alpha-D-ribose 1-phosphate: step 2/2. Catalyzes a reversible aldol reaction between acetaldehyde and D-glyceraldehyde 3-phosphate to generate 2-deoxy-D-ribose 5-phosphate. The polypeptide is Deoxyribose-phosphate aldolase (Desulfitobacterium hafniense (strain DSM 10664 / DCB-2)).